The chain runs to 84 residues: MSPLAQIFALPVRAYRLLLSPWVGHGCRYQPTCSVYALEALERHGALKGGWLAARRILRCHPWGGSGYDPVPGADPEHDRRPRG.

Residues 63–84 are disordered; sequence WGGSGYDPVPGADPEHDRRPRG. The segment covering 75–84 has biased composition (basic and acidic residues); it reads DPEHDRRPRG.

The protein belongs to the UPF0161 family.

The protein resides in the cell inner membrane. In terms of biological role, could be involved in insertion of integral membrane proteins into the membrane. The polypeptide is Putative membrane protein insertion efficiency factor (Cereibacter sphaeroides (strain ATCC 17025 / ATH 2.4.3) (Rhodobacter sphaeroides)).